The following is a 290-amino-acid chain: Mitochondrial dicarboxylate carrier (290 aa).

3 Solcar repeats span residues 6-90 (TKRL…VKKQ), 101-188 (QKAL…IKQT), and 197-281 (DNLQ…LRLK). The next 3 membrane-spanning stretches (helical) occupy residues 12 to 32 (WYFGGVAGAMAACCTHPLDLL), 65 to 84 (GVSASVLRQLTYSTTRFGIY), and 103 to 123 (ALLAGFAGACGGMVGTPGDLV). The residue at position 159 (Lys159) is an N6-acetyllysine. Transmembrane regions (helical) follow at residues 163–182 (GATMATSRAILMTIGQLSFY), 203–223 (FASSISAASVATVMTQPLDVM), and 256–276 (GFIPAWARLAPHTVLTFIFFE).

The protein belongs to the mitochondrial carrier (TC 2.A.29) family.

The protein resides in the mitochondrion inner membrane. The enzyme catalyses (S)-malate(in) + phosphate(out) = (S)-malate(out) + phosphate(in). The catalysed reaction is malonate(out) + (S)-malate(in) = malonate(in) + (S)-malate(out). It carries out the reaction (S)-malate(in) + succinate(out) = (S)-malate(out) + succinate(in). It catalyses the reaction (S)-malate(in) + sulfate(out) = (S)-malate(out) + sulfate(in). The enzyme catalyses 2 thiosulfate(out) + (S)-malate(in) = 2 thiosulfate(in) + (S)-malate(out). The catalysed reaction is malonate(out) + phosphate(in) = malonate(in) + phosphate(out). It carries out the reaction succinate(out) + phosphate(in) = succinate(in) + phosphate(out). It catalyses the reaction sulfate(out) + phosphate(in) = sulfate(in) + phosphate(out). The enzyme catalyses 2 thiosulfate(out) + phosphate(in) = 2 thiosulfate(in) + phosphate(out). The catalysed reaction is malonate(out) + succinate(in) = malonate(in) + succinate(out). Catalyzes the electroneutral exchange or flux of physiologically important metabolites such as dicarboxylates (malonate, malate, succinate), inorganic sulfur-containing anions, and phosphate, across mitochondrial inner membrane. Plays an important role in gluconeogenesis, fatty acid metabolism, urea synthesis, and sulfur metabolism, by supplying the substrates for the different metabolic processes. This is Mitochondrial dicarboxylate carrier from Caenorhabditis elegans.